The sequence spans 153 residues: MTHPLVPPITDLAIPVAEQLGLEVVGIVFHTNQRPPVLRIDIRNPQQDTGLDDCERMSRALEAALDATEIIPDAYVLEVSSPGISRQLVTDREFISFKGFPVIVSTSPPHEEQQEWIGQLIRRDETKVYINQKGRVIEIPRPLITRVLLYDGE.

It belongs to the RimP family.

The protein localises to the cytoplasm. Required for maturation of 30S ribosomal subunits. This chain is Ribosome maturation factor RimP, found in Nostoc sp. (strain PCC 7120 / SAG 25.82 / UTEX 2576).